A 143-amino-acid chain; its full sequence is uncharacterized protein (143 aa).

To E.coli YifN.

This is an uncharacterized protein from Haemophilus influenzae (strain ATCC 51907 / DSM 11121 / KW20 / Rd).